The primary structure comprises 273 residues: NH(3)-dependent NAD(+) synthetase (273 aa).

47–54 (GISGGQDS) is a binding site for ATP. Residue aspartate 53 participates in Mg(2+) binding. Arginine 139 is a deamido-NAD(+) binding site. Threonine 159 contacts ATP. Glutamate 164 provides a ligand contact to Mg(2+). Positions 172 and 179 each coordinate deamido-NAD(+). The ATP site is built by lysine 188 and threonine 210. 259-260 (HK) is a deamido-NAD(+) binding site.

Belongs to the NAD synthetase family. As to quaternary structure, homodimer.

The enzyme catalyses deamido-NAD(+) + NH4(+) + ATP = AMP + diphosphate + NAD(+) + H(+). Its pathway is cofactor biosynthesis; NAD(+) biosynthesis; NAD(+) from deamido-NAD(+) (ammonia route): step 1/1. Its function is as follows. Catalyzes the ATP-dependent amidation of deamido-NAD to form NAD. Uses ammonia as a nitrogen source. In Staphylococcus aureus (strain N315), this protein is NH(3)-dependent NAD(+) synthetase.